Reading from the N-terminus, the 210-residue chain is Large ribosomal subunit protein uL4 (210 aa).

The tract at residues Met41 to Arg79 is disordered. The span at Asn43–Lys52 shows a compositional bias: polar residues. The segment covering Gly60–Gly71 has biased composition (basic residues).

It belongs to the universal ribosomal protein uL4 family. In terms of assembly, part of the 50S ribosomal subunit.

Its function is as follows. One of the primary rRNA binding proteins, this protein initially binds near the 5'-end of the 23S rRNA. It is important during the early stages of 50S assembly. It makes multiple contacts with different domains of the 23S rRNA in the assembled 50S subunit and ribosome. In terms of biological role, forms part of the polypeptide exit tunnel. This chain is Large ribosomal subunit protein uL4, found in Cyanothece sp. (strain PCC 7425 / ATCC 29141).